The following is a 387-amino-acid chain: MGHNQPMQSSNPQEHFVQIALDIEHRLTTPISLTSDSNQRRNQWVTIIICTILAVTGQCIARLLENYYFLHKNLSRRRGILTQTLLQVVGFPILLLPFLLHFLIKKQKQLLIFSGETSLKHLAITYSILCIYMFCQAFFSDVRNQIPYRVFTLTYTTQLLFTLIFSKYYNDIKFNRWTFISLILAVLAGAFTLYTFSAGSPIYGKKSYGYGIINVAFGAAIFFSLLLCIIRKVFEELISFCNTSTNRKQPSFVVVLEMIIFLSLVVTIILVAAVLISGEHHDMKKEMETFTKGDIAYVRTMVGQAVAWQIYWVGIVGLVFAVSAVFSNVISVCTWPIVSLLVAFLYNTHDHFDVFRGIALGAAALSVSCYIYIIHKEKSDDDDQSTS.

A run of 10 helical transmembrane segments spans residues 44 to 64 (WVTIIICTILAVTGQCIARLL), 84 to 104 (TLLQVVGFPILLLPFLLHFLI), 122 to 142 (LAITYSILCIYMFCQAFFSDV), 150 to 169 (VFTLTYTTQLLFTLIFSKYY), 179 to 199 (FISLILAVLAGAFTLYTFSAG), 210 to 230 (YGIINVAFGAAIFFSLLLCII), 252 to 272 (FVVVLEMIIFLSLVVTIILVA), 306 to 326 (VAWQIYWVGIVGLVFAVSAVF), 329 to 349 (VISVCTWPIVSLLVAFLYNTH), and 354 to 374 (VFRGIALGAAALSVSCYIYII).

Belongs to the purine permeases (TC 2.A.7.14) family.

It localises to the membrane. The chain is Putative purine permease 15 (PUP15) from Arabidopsis thaliana (Mouse-ear cress).